Reading from the N-terminus, the 206-residue chain is Ras-related protein Ral-B (206 aa).

21 to 29 (GSGGVGKSA) provides a ligand contact to GTP. The short motif at 43–51 (YEPTKADSY) is the Effector region element. GTP-binding positions include 68 to 72 (DTAGQ), 128 to 131 (NKSD), and 158 to 160 (SAK). Positions 181–206 (MSENKDKNGRKSSKSKKSFKERCCLL) are disordered. Cysteine methyl ester is present on C203. The S-geranylgeranyl cysteine moiety is linked to residue C203. Residues 204-206 (CLL) constitute a propeptide, removed in mature form.

The protein belongs to the small GTPase superfamily. Ras family. As to quaternary structure, interacts with EXOC2/Sec5 and EXOC8/Exo84. Interacts (via effector domain) with RALBP1. In terms of processing, prenylation is essential for membrane localization. Post-translationally, the farnesylated form confers resistance to the proapoptotic and anti-anchorage-dependent growth effects of some geranylgeranyltransferase I inhibitors.

It localises to the cell membrane. The protein localises to the midbody. The enzyme catalyses GTP + H2O = GDP + phosphate + H(+). Its activity is regulated as follows. Alternates between an inactive form bound to GDP and an active form bound to GTP. Activated by a guanine nucleotide-exchange factor (GEF) and inactivated by a GTPase-activating protein (GAP). Its function is as follows. Multifunctional GTPase involved in a variety of cellular processes including gene expression, cell migration, cell proliferation, oncogenic transformation and membrane trafficking. Accomplishes its multiple functions by interacting with distinct downstream effectors. Acts as a GTP sensor for GTP-dependent exocytosis of dense core vesicles. Required both to stabilize the assembly of the exocyst complex and to localize functional exocyst complexes to the leading edge of migrating cells. Required for suppression of apoptosis. In late stages of cytokinesis, upon completion of the bridge formation between dividing cells, mediates exocyst recruitment to the midbody to drive abscission. Involved in ligand-dependent receptor mediated endocytosis of the EGF and insulin receptors. This Mus musculus (Mouse) protein is Ras-related protein Ral-B (Ralb).